The sequence spans 175 residues: uncharacterized protein (175 aa).

This is an uncharacterized protein from Acanthamoeba polyphaga (Amoeba).